The following is a 585-amino-acid chain: Bifunctional lycopene cyclase/phytoene synthase (585 aa).

A lycopene beta-cyclase region spans residues 1 to 243 (MGFDYAIVHV…IVFGQLAFDN (243 aa)). 7 consecutive transmembrane segments (helical) span residues 3-23 (FDYAIVHVKYTIPPAVLLTLL), 35-55 (KVLFLVTVAVTATIPWDSYLI), 75-97 (IPLEEVFFFFIQTYNTTLLYLIL), 123-141 (LAGQLFLVGATVWAGLRVH), 151-171 (LIVVWAAPIILLQWTLAYQFI), 173-193 (GLPWTNTVLPIAIPTLYLWLV), and 221-241 (IEEALFFFVTNTLIVFGQLAF). Positions 250-585 (TFPALFPKPP…AWRTLNKSIA (336 aa)) are phytoene synthase.

The protein in the N-terminal section; belongs to the lycopene beta-cyclase family. This sequence in the C-terminal section; belongs to the phytoene/squalene synthase family.

The protein localises to the membrane. It catalyses the reaction all-trans-lycopene = gamma-carotene. The catalysed reaction is gamma-carotene = all-trans-beta-carotene. The enzyme catalyses 2 (2E,6E,10E)-geranylgeranyl diphosphate = 15-cis-phytoene + 2 diphosphate. It functions in the pathway carotenoid biosynthesis; beta-carotene biosynthesis. Its pathway is carotenoid biosynthesis; phytoene biosynthesis; all-trans-phytoene from geranylgeranyl diphosphate: step 1/1. In terms of biological role, bifunctional enzyme that catalyzes the reactions from geranylgeranyl diphosphate to phytoene (phytoene synthase) and lycopene to beta-carotene via the intermediate gamma-carotene (lycopene cyclase). This is Bifunctional lycopene cyclase/phytoene synthase from Phaeosphaeria nodorum (strain SN15 / ATCC MYA-4574 / FGSC 10173) (Glume blotch fungus).